Reading from the N-terminus, the 439-residue chain is Xaa-Pro dipeptidase (439 aa).

Positions 244, 255, 335, 380, and 419 each coordinate Mn(2+).

The protein belongs to the peptidase M24B family. Bacterial-type prolidase subfamily. The cofactor is Mn(2+).

The enzyme catalyses Xaa-L-Pro dipeptide + H2O = an L-alpha-amino acid + L-proline. Its function is as follows. Splits dipeptides with a prolyl residue in the C-terminal position. This chain is Xaa-Pro dipeptidase, found in Shewanella sp. (strain MR-7).